Consider the following 772-residue polypeptide: Bromo adjacent homology domain-containing 1 protein (772 aa).

Disordered stretches follow at residues methionine 1–valine 63 and leucine 77–arginine 117. Serine 8 bears the Phosphoserine mark. Residues threonine 49–serine 61 show a composition bias toward basic residues. A phosphoserine mark is found at serine 101 and serine 121. Disordered stretches follow at residues leucine 131–tyrosine 357, glutamine 521–glycine 582, and proline 723–threonine 743. Composition is skewed to basic and acidic residues over residues arginine 147–alanine 158, arginine 170–serine 182, and glutamate 189–proline 199. A Phosphoserine modification is found at serine 182. Serine 204 carries the phosphoserine modification. Residues serine 280–glutamine 289 are compositionally biased toward pro residues. Residues leucine 299–leucine 310 show a composition bias toward low complexity. A compositionally biased stretch (pro residues) spans phenylalanine 340–glycine 352. The segment covering glycine 536–arginine 548 has biased composition (polar residues). The segment covering histidine 549 to threonine 580 has biased composition (basic residues). A Phosphothreonine modification is found at threonine 580. The BAH domain maps to glutamate 616 to proline 771.

Interacts with CBX5 (HP1 alpha), HDAC5, MBD1 and SP1. Ubiquitinated in a FBXO11-dependent manner; leading to degradation.

The protein localises to the nucleus. The protein resides in the chromosome. In terms of biological role, heterochromatin protein that acts as a transcription repressor and has the ability to promote the formation of large heterochromatic domains. May act by recruiting heterochromatin proteins such as CBX5 (HP1 alpha), HDAC5 and MBD1. Represses IGF2 expression by binding to its CpG-rich P3 promoter and recruiting heterochromatin proteins. The polypeptide is Bromo adjacent homology domain-containing 1 protein (Bahd1) (Mus musculus (Mouse)).